The primary structure comprises 265 residues: 3-methyl-2-oxobutanoate hydroxymethyltransferase (265 aa).

Mg(2+) is bound by residues aspartate 44 and aspartate 83. 3-methyl-2-oxobutanoate is bound by residues 44–45 (DS), aspartate 83, and lysine 113. Glutamate 115 provides a ligand contact to Mg(2+). Glutamate 183 functions as the Proton acceptor in the catalytic mechanism.

Belongs to the PanB family. As to quaternary structure, homodecamer; pentamer of dimers. The cofactor is Mg(2+).

It is found in the cytoplasm. The enzyme catalyses 3-methyl-2-oxobutanoate + (6R)-5,10-methylene-5,6,7,8-tetrahydrofolate + H2O = 2-dehydropantoate + (6S)-5,6,7,8-tetrahydrofolate. It participates in cofactor biosynthesis; (R)-pantothenate biosynthesis; (R)-pantoate from 3-methyl-2-oxobutanoate: step 1/2. Functionally, catalyzes the reversible reaction in which hydroxymethyl group from 5,10-methylenetetrahydrofolate is transferred onto alpha-ketoisovalerate to form ketopantoate. The protein is 3-methyl-2-oxobutanoate hydroxymethyltransferase of Leptospira borgpetersenii serovar Hardjo-bovis (strain JB197).